A 226-amino-acid polypeptide reads, in one-letter code: Phosphoglycolate phosphatase (226 aa).

The active-site Nucleophile is Asp-10. Asp-10, Asp-12, and Asp-175 together coordinate Mg(2+).

Belongs to the HAD-like hydrolase superfamily. CbbY/CbbZ/Gph/YieH family. Requires Mg(2+) as cofactor.

It carries out the reaction 2-phosphoglycolate + H2O = glycolate + phosphate. Its pathway is organic acid metabolism; glycolate biosynthesis; glycolate from 2-phosphoglycolate: step 1/1. Its function is as follows. Specifically catalyzes the dephosphorylation of 2-phosphoglycolate. Is involved in the dissimilation of the intracellular 2-phosphoglycolate formed during the DNA repair of 3'-phosphoglycolate ends, a major class of DNA lesions induced by oxidative stress. In Vibrio cholerae serotype O1 (strain ATCC 39315 / El Tor Inaba N16961), this protein is Phosphoglycolate phosphatase.